Reading from the N-terminus, the 420-residue chain is 3-isopropylmalate dehydratase large subunit (420 aa).

[4Fe-4S] cluster-binding residues include C300, C360, and C363.

This sequence belongs to the aconitase/IPM isomerase family. LeuC type 2 subfamily. Heterodimer of LeuC and LeuD. [4Fe-4S] cluster is required as a cofactor.

The catalysed reaction is (2R,3S)-3-isopropylmalate = (2S)-2-isopropylmalate. Its pathway is amino-acid biosynthesis; L-leucine biosynthesis; L-leucine from 3-methyl-2-oxobutanoate: step 2/4. Catalyzes the isomerization between 2-isopropylmalate and 3-isopropylmalate, via the formation of 2-isopropylmaleate. This is 3-isopropylmalate dehydratase large subunit from Helicobacter hepaticus (strain ATCC 51449 / 3B1).